We begin with the raw amino-acid sequence, 431 residues long: Adenylosuccinate synthetase (431 aa).

GTP-binding positions include 12 to 18 (GDEGKGK) and 40 to 42 (GHS). The active-site Proton acceptor is Asp-13. Asp-13 and Gly-40 together coordinate Mg(2+). Residues 13–16 (DEGK) and 38–41 (NAGH) contribute to the IMP site. His-41 serves as the catalytic Proton donor. The disordered stretch occupies residues 114–133 (QQQERDRSKNGEKIGTTNKG). The span at 115–125 (QQERDRSKNGE) shows a compositional bias: basic and acidic residues. IMP is bound by residues Thr-130, Arg-144, Gln-225, Thr-240, and Arg-304. Residue 300 to 306 (TVTKRPR) participates in substrate binding. GTP is bound by residues Arg-306, 332–334 (CLD), and 414–416 (SIG).

This sequence belongs to the adenylosuccinate synthetase family. As to quaternary structure, homodimer. The cofactor is Mg(2+).

It is found in the cytoplasm. The catalysed reaction is IMP + L-aspartate + GTP = N(6)-(1,2-dicarboxyethyl)-AMP + GDP + phosphate + 2 H(+). It functions in the pathway purine metabolism; AMP biosynthesis via de novo pathway; AMP from IMP: step 1/2. In terms of biological role, plays an important role in the de novo pathway of purine nucleotide biosynthesis. Catalyzes the first committed step in the biosynthesis of AMP from IMP. In Pediococcus pentosaceus (strain ATCC 25745 / CCUG 21536 / LMG 10740 / 183-1w), this protein is Adenylosuccinate synthetase.